Reading from the N-terminus, the 120-residue chain is ATP-dependent Clp protease adapter protein ClpS (120 aa).

This sequence belongs to the ClpS family. In terms of assembly, binds to the N-terminal domain of the chaperone ClpA.

Involved in the modulation of the specificity of the ClpAP-mediated ATP-dependent protein degradation. The sequence is that of ATP-dependent Clp protease adapter protein ClpS from Pseudomonas fluorescens (strain ATCC BAA-477 / NRRL B-23932 / Pf-5).